Consider the following 278-residue polypeptide: Large ribosomal subunit protein uL2 (278 aa).

Disordered stretches follow at residues 33-53 (LTEG…TSRG) and 221-278 (RGVA…KKKR). Positions 269–278 (IRSRHAKKKR) are enriched in basic residues.

This sequence belongs to the universal ribosomal protein uL2 family. In terms of assembly, part of the 50S ribosomal subunit. Forms a bridge to the 30S subunit in the 70S ribosome.

Its function is as follows. One of the primary rRNA binding proteins. Required for association of the 30S and 50S subunits to form the 70S ribosome, for tRNA binding and peptide bond formation. It has been suggested to have peptidyltransferase activity; this is somewhat controversial. Makes several contacts with the 16S rRNA in the 70S ribosome. The protein is Large ribosomal subunit protein uL2 of Novosphingobium aromaticivorans (strain ATCC 700278 / DSM 12444 / CCUG 56034 / CIP 105152 / NBRC 16084 / F199).